Here is a 158-residue protein sequence, read N- to C-terminus: UPF0262 protein Rsph17025_0594 (158 aa).

Belongs to the UPF0262 family.

This is UPF0262 protein Rsph17025_0594 from Cereibacter sphaeroides (strain ATCC 17025 / ATH 2.4.3) (Rhodobacter sphaeroides).